The chain runs to 629 residues: TRAF3-interacting protein 1 (629 aa).

Residues Ala-130–Lys-511 are disordered. A compositionally biased stretch (basic and acidic residues) spans Ser-145–Lys-306. A coiled-coil region spans residues Arg-220–Arg-282. Residues Glu-352–Ala-362 show a composition bias toward acidic residues. The span at Arg-394–Pro-403 shows a compositional bias: low complexity. The segment covering Gly-471 to Lys-511 has biased composition (basic and acidic residues). Positions Lys-511–Ile-602 form a coiled coil.

The protein belongs to the TRAF3IP1 family. Component of the IFT complex B, at least composed of ift20, ift22, ift25, ift27, ift46, ift52, traf3ip1/ift54, ift57, ift74, ift80, ift81, and ift88. Interacts with ift88. Interacts with il13ra1. Binds to microtubules, traf3 and disc1. Interacts with map4.

It is found in the cytoplasm. It localises to the cytoskeleton. The protein resides in the cell projection. The protein localises to the cilium. Its subcellular location is the cilium axoneme. It is found in the cilium basal body. In terms of biological role, plays an inhibitory role on IL13 signaling by binding to IL13RA1 and recruits TRAF3 and DISC1 to the microtubules. Involved in the regulation of microtubule cytoskeleton organization. Is a negative regulator of microtubule stability, acting through the control of MAP4 levels. Involved in ciliogenesis. This chain is TRAF3-interacting protein 1 (traf3ip1), found in Danio rerio (Zebrafish).